A 481-amino-acid chain; its full sequence is Cobyric acid synthase (481 aa).

Residues 248–435 (ALTVAWLAFS…LHGMFGADGF (188 aa)) enclose the GATase cobBQ-type domain. The Nucleophile role is filled by Cys330. Residue His427 is part of the active site.

It belongs to the CobB/CobQ family. CobQ subfamily.

It participates in cofactor biosynthesis; adenosylcobalamin biosynthesis. Its function is as follows. Catalyzes amidations at positions B, D, E, and G on adenosylcobyrinic A,C-diamide. NH(2) groups are provided by glutamine, and one molecule of ATP is hydrogenolyzed for each amidation. This is Cobyric acid synthase from Cereibacter sphaeroides (strain ATCC 17023 / DSM 158 / JCM 6121 / CCUG 31486 / LMG 2827 / NBRC 12203 / NCIMB 8253 / ATH 2.4.1.) (Rhodobacter sphaeroides).